Reading from the N-terminus, the 346-residue chain is MDTGPDQSYFSGNHWFVFSVYLLTFLVGLPLNLLALVVFVGKLQRRPVAVDVLLLNLTASDLLLLLFLPFRMVEAANGMHWPLPFILCPLSGFIFFTTIYLTALFLAAVSIERFLSVAHPLWYKTRPRLGQAGLVSVACWLLASAHCSVVYVIEFSGDISHSQGTNGTCYLEFRKDQLAILLPVRLEMAVVLFVVPLIITSYCYSRLVWILGRGGSHRRQRRVAGLLAATLLNFLVCFGPYNVSHVVGYICGESPAWRIYVTLLSTLNSCVDPFVYYFSSSGFQADFHELLRRLCGLWGQWQQESSMELKEQKGGEEQRADRPAERKTSEHSQGCGTGGQVACAES.

The Extracellular segment spans residues 1–19; it reads MDTGPDQSYFSGNHWFVFS. A helical membrane pass occupies residues 20–40; it reads VYLLTFLVGLPLNLLALVVFV. Residues 41-47 are Cytoplasmic-facing; that stretch reads GKLQRRP. Residues 48-68 form a helical membrane-spanning segment; it reads VAVDVLLLNLTASDLLLLLFL. The Extracellular portion of the chain corresponds to 69–88; that stretch reads PFRMVEAANGMHWPLPFILC. Cysteine 88 and cysteine 169 are oxidised to a cystine. Residues 89–111 form a helical membrane-spanning segment; the sequence is PLSGFIFFTTIYLTALFLAAVSI. At 112–132 the chain is on the cytoplasmic side; it reads ERFLSVAHPLWYKTRPRLGQA. Residues 133-153 form a helical membrane-spanning segment; the sequence is GLVSVACWLLASAHCSVVYVI. Residues 154-178 are Extracellular-facing; that stretch reads EFSGDISHSQGTNGTCYLEFRKDQL. Asparagine 166 carries an N-linked (GlcNAc...) asparagine glycan. A helical transmembrane segment spans residues 179-199; that stretch reads AILLPVRLEMAVVLFVVPLII. Residues 200 to 222 are Cytoplasmic-facing; it reads TSYCYSRLVWILGRGGSHRRQRR. A helical transmembrane segment spans residues 223 to 243; sequence VAGLLAATLLNFLVCFGPYNV. Over 244 to 258 the chain is Extracellular; the sequence is SHVVGYICGESPAWR. A helical membrane pass occupies residues 259 to 279; the sequence is IYVTLLSTLNSCVDPFVYYFS. Residues 280–346 lie on the Cytoplasmic side of the membrane; the sequence is SSGFQADFHE…TGGQVACAES (67 aa). The span at 307 to 330 shows a compositional bias: basic and acidic residues; the sequence is MELKEQKGGEEQRADRPAERKTSE. The interval 307 to 346 is disordered; that stretch reads MELKEQKGGEEQRADRPAERKTSEHSQGCGTGGQVACAES.

This sequence belongs to the G-protein coupled receptor 1 family. Highest level in adipose tissue, and lower expression across all tissues tested. Expressed in sympathetic ganglia.

It is found in the cell membrane. Its function is as follows. G protein-coupled receptor that is activated by a major product of dietary fiber digestion, the short chain fatty acids (SCFAs), and that plays a role in the regulation of whole-body energy homeostasis and in intestinal immunity. In omnivorous mammals, the short chain fatty acids acetate, propionate and butyrate are produced primarily by the gut microbiome that metabolizes dietary fibers. SCFAs serve as a source of energy but also act as signaling molecules. That G protein-coupled receptor is probably coupled to the pertussis toxin-sensitive, G(i/o)-alpha family of G proteins. Its activation results in the formation of inositol 1,4,5-trisphosphate, the mobilization of intracellular calcium, the phosphorylation of the MAPK3/ERK1 and MAPK1/ERK2 kinases and the inhibition of intracellular cAMP accumulation. Activated by SCFAs and by beta-hydroxybutyrate, a ketone body produced by the liver upon starvation, it inhibits N-type calcium channels and modulates the activity of sympathetic neurons through a signaling cascade involving the beta and gamma subunits of its coupled G protein, phospholipase C and MAP kinases. Thereby, it may regulate energy expenditure through the control of the sympathetic nervous system that controls for instance heart rate. Upon activation by SCFAs accumulating in the intestine, it may also signal to the brain via neural circuits which in turn would regulate intestinal gluconeogenesis. May also control the production of hormones involved in whole-body energy homeostasis. May for instance, regulate blood pressure through renin secretion. May also regulate secretion of the PYY peptide by enteroendocrine cells and control gut motility, intestinal transit rate, and the harvesting of energy from SCFAs produced by gut microbiota. May also indirectly regulate the production of LEP/Leptin, a hormone acting on the CNS to inhibit food intake, in response to the presence of short-chain fatty acids in the intestine. Finally, may also play a role in glucose homeostasis. Besides its role in energy homeostasis, may play a role in intestinal immunity. May mediate the activation of the inflammatory and immune response by SCFAs in the gut, regulating the rapid production of chemokines and cytokines by intestinal epithelial cells. Among SCFAs, the fatty acids containing less than 6 carbons, the most potent activators are probably propionate, butyrate and pentanoate while acetate is a poor activator. The chain is Free fatty acid receptor 3 (FFAR3) from Homo sapiens (Human).